A 436-amino-acid chain; its full sequence is UPF0597 protein YhaM (436 aa).

The protein belongs to the UPF0597 family.

The chain is UPF0597 protein YhaM from Shigella boydii serotype 4 (strain Sb227).